Here is a 357-residue protein sequence, read N- to C-terminus: UDP-N-acetylglucosamine--N-acetylmuramyl-(pentapeptide) pyrophosphoryl-undecaprenol N-acetylglucosamine transferase (357 aa).

UDP-N-acetyl-alpha-D-glucosamine contacts are provided by residues 14–16 (SGG), Asn125, Ser190, and Gln290.

The protein belongs to the glycosyltransferase 28 family. MurG subfamily.

The protein localises to the cell inner membrane. The enzyme catalyses di-trans,octa-cis-undecaprenyl diphospho-N-acetyl-alpha-D-muramoyl-L-alanyl-D-glutamyl-meso-2,6-diaminopimeloyl-D-alanyl-D-alanine + UDP-N-acetyl-alpha-D-glucosamine = di-trans,octa-cis-undecaprenyl diphospho-[N-acetyl-alpha-D-glucosaminyl-(1-&gt;4)]-N-acetyl-alpha-D-muramoyl-L-alanyl-D-glutamyl-meso-2,6-diaminopimeloyl-D-alanyl-D-alanine + UDP + H(+). It functions in the pathway cell wall biogenesis; peptidoglycan biosynthesis. In terms of biological role, cell wall formation. Catalyzes the transfer of a GlcNAc subunit on undecaprenyl-pyrophosphoryl-MurNAc-pentapeptide (lipid intermediate I) to form undecaprenyl-pyrophosphoryl-MurNAc-(pentapeptide)GlcNAc (lipid intermediate II). In Chlamydia felis (strain Fe/C-56) (Chlamydophila felis), this protein is UDP-N-acetylglucosamine--N-acetylmuramyl-(pentapeptide) pyrophosphoryl-undecaprenol N-acetylglucosamine transferase.